The sequence spans 412 residues: Histidinol dehydrogenase (412 aa).

The NAD(+) site is built by Y118, Q176, and N199. Substrate is bound by residues T222, Q244, and H247. Residues Q244 and H247 each coordinate Zn(2+). Residues E311 and H312 each act as proton acceptor in the active site. Substrate is bound by residues H312, D345, E399, and H404. D345 is a Zn(2+) binding site. Residue H404 coordinates Zn(2+).

It belongs to the histidinol dehydrogenase family. It depends on Zn(2+) as a cofactor.

It catalyses the reaction L-histidinol + 2 NAD(+) + H2O = L-histidine + 2 NADH + 3 H(+). Its pathway is amino-acid biosynthesis; L-histidine biosynthesis; L-histidine from 5-phospho-alpha-D-ribose 1-diphosphate: step 9/9. Functionally, catalyzes the sequential NAD-dependent oxidations of L-histidinol to L-histidinaldehyde and then to L-histidine. The protein is Histidinol dehydrogenase of Thermus thermophilus (strain ATCC BAA-163 / DSM 7039 / HB27).